Here is a 128-residue protein sequence, read N- to C-terminus: Large ribosomal subunit protein bL12 (128 aa).

Belongs to the bacterial ribosomal protein bL12 family. Homodimer. Part of the ribosomal stalk of the 50S ribosomal subunit. Forms a multimeric L10(L12)X complex, where L10 forms an elongated spine to which 2 to 4 L12 dimers bind in a sequential fashion. Binds GTP-bound translation factors.

Functionally, forms part of the ribosomal stalk which helps the ribosome interact with GTP-bound translation factors. Is thus essential for accurate translation. This chain is Large ribosomal subunit protein bL12, found in Synechococcus sp. (strain CC9902).